The primary structure comprises 600 residues: Dihydroxy-acid dehydratase (600 aa).

D82 is a binding site for Mg(2+). C123 is a [2Fe-2S] cluster binding site. D124 and K125 together coordinate Mg(2+). K125 carries the post-translational modification N6-carboxylysine. [2Fe-2S] cluster is bound at residue C192. Mg(2+) is bound at residue E489. S515 functions as the Proton acceptor in the catalytic mechanism.

Belongs to the IlvD/Edd family. In terms of assembly, homodimer. It depends on [2Fe-2S] cluster as a cofactor. Mg(2+) serves as cofactor.

The catalysed reaction is (2R)-2,3-dihydroxy-3-methylbutanoate = 3-methyl-2-oxobutanoate + H2O. The enzyme catalyses (2R,3R)-2,3-dihydroxy-3-methylpentanoate = (S)-3-methyl-2-oxopentanoate + H2O. It functions in the pathway amino-acid biosynthesis; L-isoleucine biosynthesis; L-isoleucine from 2-oxobutanoate: step 3/4. The protein operates within amino-acid biosynthesis; L-valine biosynthesis; L-valine from pyruvate: step 3/4. Functionally, functions in the biosynthesis of branched-chain amino acids. Catalyzes the dehydration of (2R,3R)-2,3-dihydroxy-3-methylpentanoate (2,3-dihydroxy-3-methylvalerate) into 2-oxo-3-methylpentanoate (2-oxo-3-methylvalerate) and of (2R)-2,3-dihydroxy-3-methylbutanoate (2,3-dihydroxyisovalerate) into 2-oxo-3-methylbutanoate (2-oxoisovalerate), the penultimate precursor to L-isoleucine and L-valine, respectively. In Bacteroides fragilis (strain YCH46), this protein is Dihydroxy-acid dehydratase.